Reading from the N-terminus, the 160-residue chain is ATP synthase subunit b, chloroplastic (160 aa).

The chain crosses the membrane as a helical span at residues 12-31 (NVINIAILVVILIRFARQVV).

It belongs to the ATPase B chain family. As to quaternary structure, F-type ATPases have 2 components, F(1) - the catalytic core - and F(0) - the membrane proton channel. F(1) has five subunits: alpha(3), beta(3), gamma(1), delta(1), epsilon(1). F(0) has four main subunits: a(1), b(1), b'(1) and c(10-14). The alpha and beta chains form an alternating ring which encloses part of the gamma chain. F(1) is attached to F(0) by a central stalk formed by the gamma and epsilon chains, while a peripheral stalk is formed by the delta, b and b' chains.

Its subcellular location is the plastid. It is found in the chloroplast thylakoid membrane. F(1)F(0) ATP synthase produces ATP from ADP in the presence of a proton or sodium gradient. F-type ATPases consist of two structural domains, F(1) containing the extramembraneous catalytic core and F(0) containing the membrane proton channel, linked together by a central stalk and a peripheral stalk. During catalysis, ATP synthesis in the catalytic domain of F(1) is coupled via a rotary mechanism of the central stalk subunits to proton translocation. Functionally, component of the F(0) channel, it forms part of the peripheral stalk, linking F(1) to F(0). The chain is ATP synthase subunit b, chloroplastic from Cyanidioschyzon merolae (strain NIES-3377 / 10D) (Unicellular red alga).